Here is a 146-residue protein sequence, read N- to C-terminus: Leghemoglobin 1 (146 aa).

The 145-residue stretch at G2–G146 folds into the Globin domain. At Y29 the chain carries Nitrated tyrosine. S44 lines the heme b pocket. The residue at position 44 (S44) is a Phosphoserine. O2 is bound at residue H61. 3 residues coordinate heme b: K64, H93, and K96. Nitrated tyrosine is present on Y134.

It belongs to the plant globin family. In terms of assembly, monomer. In terms of processing, nitrated in effective nodules and particularly in hypoxic conditions; this mechanism may play a protective role in the symbiosis by buffering toxic peroxynitrite NO(2)(-). Nitration level decrease during nodule senescence. Phosphorylation at Ser-44 disrupts the molecular environment of its porphyrin ring oxygen binding pocket, thus leading to a reduced oxygen consumption and to the delivery of oxygen O(2) to symbiosomes. As to expression, root nodules.

It is found in the cytoplasm. The protein resides in the cytosol. The protein localises to the nucleus. Leghemoglobin that reversibly binds oxygen O(2) through a pentacoordinated heme iron. In root nodules, facilitates the diffusion of oxygen to the bacteroids while preventing the bacterial nitrogenase from being inactivated by buffering dioxygen, nitric oxide and carbon monoxide, and promoting the formation of reactive oxygen species (ROS, e.g. H(2)O(2)). This role is essential for symbiotic nitrogen fixation (SNF). This is Leghemoglobin 1 from Medicago truncatula (Barrel medic).